A 301-amino-acid polypeptide reads, in one-letter code: Phosducin-like protein (301 aa).

N-acetylthreonine is present on Thr2. A disordered region spans residues 18 to 57; the sequence is SSSEDEDSDHEDKDRGRCAPASSSVPAEAELAGEGISVNT. Phosphoserine occurs at positions 20 and 25. Residues 36 to 49 show a composition bias toward low complexity; it reads APASSSVPAEAELA. The 264-residue stretch at 36-299 folds into the Phosducin domain; it reads APASSSVPAE…TCHSEDSDLE (264 aa). Phosphoserine occurs at positions 226, 293, and 296.

Belongs to the phosducin family. Forms a complex with the beta and gamma subunits of the GTP-binding protein, transducin. Interacts with the CCT chaperonin complex.

Its subcellular location is the cell projection. It is found in the cilium. Functionally, acts as a positive regulator of hedgehog signaling and regulates ciliary function. In terms of biological role, functions as a co-chaperone for CCT in the assembly of heterotrimeric G protein complexes, facilitates the assembly of both Gbeta-Ggamma and RGS-Gbeta5 heterodimers. Acts as a negative regulator of heterotrimeric G proteins assembly by trapping the preloaded G beta subunits inside the CCT chaperonin. This Homo sapiens (Human) protein is Phosducin-like protein (PDCL).